The chain runs to 145 residues: Hemoglobin subunit beta-1 (145 aa).

The Globin domain maps to 1 to 145 (TFTNDESQHI…VEAALATGYH (145 aa)). Heme b contacts are provided by His-62 and His-91.

Belongs to the globin family. Major hemoglobin is a tetramer of two alpha-1 chains and two beta-1 chains. Red blood cells.

In terms of biological role, involved in oxygen transport from the lung to the various peripheral tissues. This Triturus cristatus (Great crested newt) protein is Hemoglobin subunit beta-1 (HBB1).